The chain runs to 95 residues: Large ribosomal subunit protein eL37y (95 aa).

Cysteine 19, cysteine 22, cysteine 34, and cysteine 37 together coordinate Zn(2+). The C4-type zinc-finger motif lies at 19–37 (CVRCGRRSFHIQKSRCSAC).

This sequence belongs to the eukaryotic ribosomal protein eL37 family. The cofactor is Zn(2+).

Functionally, binds to the 23S rRNA. This is Large ribosomal subunit protein eL37y (RPL37B) from Arabidopsis thaliana (Mouse-ear cress).